Reading from the N-terminus, the 490-residue chain is Betaine aldehyde dehydrogenase (490 aa).

The K(+) site is built by Ile-27 and Asp-93. 150–152 (GAW) provides a ligand contact to NAD(+). Lys-162 acts as the Charge relay system in catalysis. Residue 176–179 (KPSE) participates in NAD(+) binding. Residue Val-180 participates in K(+) binding. 230–233 (GTTT) provides a ligand contact to NAD(+). Leu-246 provides a ligand contact to K(+). Glu-252 (proton acceptor) is an active-site residue. NAD(+)-binding residues include Gly-254, Cys-286, and Glu-387. Cys-286 functions as the Nucleophile in the catalytic mechanism. Cys-286 carries the post-translational modification Cysteine sulfenic acid (-SOH). K(+)-binding residues include Lys-457 and Gly-460. The Charge relay system role is filled by Glu-464.

The protein belongs to the aldehyde dehydrogenase family. Dimer of dimers. K(+) is required as a cofactor.

The catalysed reaction is betaine aldehyde + NAD(+) + H2O = glycine betaine + NADH + 2 H(+). Its pathway is amine and polyamine biosynthesis; betaine biosynthesis via choline pathway; betaine from betaine aldehyde: step 1/1. In terms of biological role, involved in the biosynthesis of the osmoprotectant glycine betaine. Catalyzes the irreversible oxidation of betaine aldehyde to the corresponding acid. The polypeptide is Betaine aldehyde dehydrogenase (Pseudomonas putida (strain ATCC 700007 / DSM 6899 / JCM 31910 / BCRC 17059 / LMG 24140 / F1)).